Consider the following 529-residue polypeptide: Potassium voltage-gated channel subfamily A member 6 (529 aa).

The disordered stretch occupies residues Met-1 to Gly-33. Over Met-1–Gly-171 the chain is Cytoplasmic. Ser-3 is modified (phosphoserine). A helical membrane pass occupies residues Pro-172–Leu-193. The Extracellular portion of the chain corresponds to Glu-194–Pro-262. The segment covering Gly-210 to Gly-220 has biased composition (low complexity). Residues Gly-210 to Thr-233 are disordered. The helical transmembrane segment at Phe-263–Ala-284 threads the bilayer. Cys-285 carries the S-palmitoyl cysteine lipid modification. Residues Cys-285 to Ile-295 lie on the Cytoplasmic side of the membrane. Residues Met-296–Val-316 traverse the membrane as a helical segment. Residues Gln-317–Ser-337 are Extracellular-facing. A helical; Voltage-sensor transmembrane segment spans residues Leu-338–His-358. Topologically, residues Ser-359–Met-373 are cytoplasmic. The segment at Lys-360 to Met-373 is S4-S5 linker. A helical membrane pass occupies residues Arg-374–Tyr-395. The Extracellular segment spans residues Phe-396–Ile-409. The segment at residues Pro-410–Thr-421 is an intramembrane region (helical). Positions Thr-422–Asp-427 match the Selectivity filter motif. Residues Thr-422–Tyr-429 lie within the membrane without spanning it. The Extracellular portion of the chain corresponds to Pro-430–Lys-436. A helical membrane pass occupies residues Ile-437–Tyr-465. Residues His-466–Val-529 lie on the Cytoplasmic side of the membrane. Residues Asp-488 to Leu-513 are disordered. Residues Asp-500–Pro-510 are compositionally biased toward basic and acidic residues. A Phosphoserine; by PKA modification is found at Ser-511. Residues Thr-527–Val-529 carry the PDZ-binding motif.

Belongs to the potassium channel family. A (Shaker) (TC 1.A.1.2) subfamily. Kv1.6/KCNA6 sub-subfamily. In terms of assembly, homotetramer and heterotetramer of potassium channel proteins. Interacts with KCNAB1 and KCNAB2.

It localises to the cell membrane. The catalysed reaction is K(+)(in) = K(+)(out). Voltage-gated potassium channel that mediates transmembrane potassium transport in excitable membranes. Forms tetrameric potassium-selective channels through which potassium ions pass in accordance with their electrochemical gradient. The channel alternates between opened and closed conformations in response to the voltage difference across the membrane. Can form functional homotetrameric channels and heterotetrameric channels that contain variable proportions of KCNA1, KCNA2, KCNA4, KCNA6, and possibly other family members as well; channel properties depend on the type of alpha subunits that are part of the channel. Channel properties are modulated by cytoplasmic beta subunits that regulate the subcellular location of the alpha subunits and promote rapid inactivation. Homotetrameric channels display rapid activation and slow inactivation. In Homo sapiens (Human), this protein is Potassium voltage-gated channel subfamily A member 6 (KCNA6).